A 641-amino-acid polypeptide reads, in one-letter code: Probable potassium transport system protein Kup (641 aa).

Residues 1–14 (MALDSESSASNRQG) show a composition bias toward polar residues. Residues 1–20 (MALDSESSASNRQGSRNEQD) are disordered. The next 12 membrane-spanning stretches (helical) occupy residues 29 to 49 (LCLTALGVVYGDIATSPLYAF), 69 to 89 (ILSLIFWALIILVSIKYLLII), 120 to 140 (VLIVLGLFGAALLYGDGMITP), 156 to 176 (PQLTSYIIPATTVILVLLFMV), 188 to 208 (FGPIMLVWFVVIALLGLNGII), 236 to 256 (VLGGVFLALTGAEALYADMGH), 267 to 287 (FALVLPALLLNYFGQGALLLL), 307 to 327 (LVGLATLATIIASQAIISGVF), 355 to 375 (VYVPAANWFMMIAAVWLVLHF), 384 to 404 (AFGIAVSGTMVITTILAFFVM), 410 to 430 (WNILTAVAVTVGFLIIDLAFF), and 437 to 457 (ITDGGWFPLAIAVFIFTLMIT).

Belongs to the HAK/KUP transporter (TC 2.A.72) family.

It is found in the cell inner membrane. The enzyme catalyses K(+)(in) + H(+)(in) = K(+)(out) + H(+)(out). In terms of biological role, transport of potassium into the cell. Likely operates as a K(+):H(+) symporter. This chain is Probable potassium transport system protein Kup, found in Nitrosomonas eutropha (strain DSM 101675 / C91 / Nm57).